A 105-amino-acid polypeptide reads, in one-letter code: UPF0235 protein CT1832 (105 aa).

It belongs to the UPF0235 family.

The sequence is that of UPF0235 protein CT1832 from Chlorobaculum tepidum (strain ATCC 49652 / DSM 12025 / NBRC 103806 / TLS) (Chlorobium tepidum).